Here is a 186-residue protein sequence, read N- to C-terminus: MKIYVLRYGHRPGRDKRITTHVGLVARAFGAHGFILGDVIDEKVIGSIKKVMERWGGNLYIDAGVDSRKYVLEWKRRGGIVVHLTMYGLHIDDVIDEIRGLNKDILIVVGAEKVPPFFYEVADYNVAIGHQPHSEVAALAVFLDRFYMGKELHLSFPNAKLIIVPSPRGKKVKKIAEEEEGESTKD.

S-adenosyl-L-methionine-binding positions include leucine 84 and 110–114 (GAEKV).

The protein belongs to the aTrm56 family. In terms of assembly, homodimer.

It localises to the cytoplasm. It catalyses the reaction cytidine(56) in tRNA + S-adenosyl-L-methionine = 2'-O-methylcytidine(56) in tRNA + S-adenosyl-L-homocysteine + H(+). In terms of biological role, specifically catalyzes the AdoMet-dependent 2'-O-ribose methylation of cytidine at position 56 in tRNAs. The protein is tRNA (cytidine(56)-2'-O)-methyltransferase of Staphylothermus marinus (strain ATCC 43588 / DSM 3639 / JCM 9404 / F1).